We begin with the raw amino-acid sequence, 540 residues long: Zinc metalloproteinase nas-10 (540 aa).

In terms of domain architecture, Peptidase M12A spans 293–500; it reads ASIFFEQNLI…VEILNKMYCK (208 aa). 5 cysteine pairs are disulfide-bonded: Cys339/Cys499, Cys365/Cys385, Cys504/Cys540, Cys511/Cys533, and Cys520/Cys537. Position 394 (His394) interacts with Zn(2+). The active site involves Glu395. Zn(2+) is bound by residues His398 and His404. A ShKT domain is found at 504–540; the sequence is CDDKNVYCGAWALQDLCNNPNHNVWMRSNCRKSCNFC.

Zn(2+) serves as cofactor.

In terms of biological role, metalloprotease. The protein is Zinc metalloproteinase nas-10 of Caenorhabditis elegans.